A 234-amino-acid polypeptide reads, in one-letter code: Methylamine utilization ferredoxin-type protein MauM (234 aa).

4Fe-4S ferredoxin-type domains are found at residues 61 to 91 (ALAEKDFQSACVRCGLCVEDCPFDILKLASW), 98 to 131 (GTPFFTARDEPCRMCQDIPCVRACPTGALNPLLT), 140 to 176 (VAVLVDHETCLNYKGLNCSICVRVCPIRGEAISLKPI), and 184 to 215 (QIPTVDSTKCTGCGTCEKHCVLSEAAIRVLPR). The [4Fe-4S] cluster site is built by Cys-71, Cys-74, Cys-77, Cys-81, Cys-109, Cys-112, Cys-117, Cys-121, Cys-149, Cys-157, Cys-160, Cys-164, Cys-193, Cys-196, Cys-199, and Cys-203.

The protein operates within one-carbon metabolism; methylamine degradation. Involved in electron transfer. This is Methylamine utilization ferredoxin-type protein MauM (mauM) from Methylobacillus flagellatus (strain ATCC 51484 / DSM 6875 / VKM B-1610 / KT).